The following is a 79-amino-acid chain: Darcynin (79 aa).

It belongs to the darcynin family.

In Chromobacterium violaceum (strain ATCC 12472 / DSM 30191 / JCM 1249 / CCUG 213 / NBRC 12614 / NCIMB 9131 / NCTC 9757 / MK), this protein is Darcynin.